Reading from the N-terminus, the 293-residue chain is Probable aspartoacylase (293 aa).

Zn(2+) is bound by residues His14 and Glu17. Residues Arg56 and 63–64 (NR) each bind substrate. A Zn(2+)-binding site is contributed by His106. The substrate site is built by Glu165 and Tyr276.

Belongs to the AspA/AstE family. Aspartoacylase subfamily. Requires Zn(2+) as cofactor.

The catalysed reaction is an N-acyl-L-aspartate + H2O = a carboxylate + L-aspartate. This Trichodesmium erythraeum (strain IMS101) protein is Probable aspartoacylase.